Reading from the N-terminus, the 159-residue chain is Nucleotide-binding protein PSPPH_4093 (159 aa).

Belongs to the YajQ family.

Its function is as follows. Nucleotide-binding protein. The polypeptide is Nucleotide-binding protein PSPPH_4093 (Pseudomonas savastanoi pv. phaseolicola (strain 1448A / Race 6) (Pseudomonas syringae pv. phaseolicola (strain 1448A / Race 6))).